A 173-amino-acid polypeptide reads, in one-letter code: Photosystem I assembly protein Ycf3 (173 aa).

TPR repeat units follow at residues 35–68 (AFVYYRDGMSAQAEGEYAEALEYYEEALTLEEDT), 72–105 (GYILYNMGLIYASNGDHNKALELYHQAIELNPRL), and 120–153 (GEKEKEAGDNEAGEALFDQAADYWIRAIRMAPNN).

It belongs to the Ycf3 family.

The protein localises to the cellular thylakoid membrane. In terms of biological role, essential for the assembly of the photosystem I (PSI) complex. May act as a chaperone-like factor to guide the assembly of the PSI subunits. The polypeptide is Photosystem I assembly protein Ycf3 (Nostoc punctiforme (strain ATCC 29133 / PCC 73102)).